Here is a 476-residue protein sequence, read N- to C-terminus: MAQYSAEFKQAKVLVLGDVMLDRYWFGATNRISPEAPVPVVRVQENEERAGGAANVAMNIASLNVPVQLMGLIGQDETGSALSLLLEKQKIDCNFVALETHPTITKLRILSRHQQLLRLDFEEDFNNVDCKDLLAKLESAVKNYGALILSDYGKGTLKDVQKMIQIARKANVPVLIDPKGTDFERYCGATLLTPNMSEFEAVVGKCNTEEEIIKKGLKLISDIELTALLVTRSEKGMTLLRPNQEPYHLPTVAKEVFDVTGAGDTVISVLATALADGRSFEESCYLANVAAGIVVGKLGTSTVSTVELENAIHARPETGFGIMSEAELKDAVAQAKARGEKIVMTNGCFDILHPGHISYLENARKLGDRLIVAVNSDDSVKRLKGESRPINNLENRMAVLAGLASVDWLVPFTEDTPQHLIGEILPDLLVKGGDYKPEEIAGSKEVWANGGDVKVLNFENGCSTTNVIEKIKLLKD.

The tract at residues Met1–Thr318 is ribokinase. Residue Asn195 to Glu198 coordinates ATP. Asp264 is a catalytic residue. The segment at Met344–Asp476 is cytidylyltransferase.

This sequence in the N-terminal section; belongs to the carbohydrate kinase PfkB family. The protein in the C-terminal section; belongs to the cytidylyltransferase family. In terms of assembly, homodimer.

It carries out the reaction D-glycero-beta-D-manno-heptose 7-phosphate + ATP = D-glycero-beta-D-manno-heptose 1,7-bisphosphate + ADP + H(+). It catalyses the reaction D-glycero-beta-D-manno-heptose 1-phosphate + ATP + H(+) = ADP-D-glycero-beta-D-manno-heptose + diphosphate. The protein operates within nucleotide-sugar biosynthesis; ADP-L-glycero-beta-D-manno-heptose biosynthesis; ADP-L-glycero-beta-D-manno-heptose from D-glycero-beta-D-manno-heptose 7-phosphate: step 1/4. It participates in nucleotide-sugar biosynthesis; ADP-L-glycero-beta-D-manno-heptose biosynthesis; ADP-L-glycero-beta-D-manno-heptose from D-glycero-beta-D-manno-heptose 7-phosphate: step 3/4. Catalyzes the phosphorylation of D-glycero-D-manno-heptose 7-phosphate at the C-1 position to selectively form D-glycero-beta-D-manno-heptose-1,7-bisphosphate. Its function is as follows. Catalyzes the ADP transfer from ATP to D-glycero-beta-D-manno-heptose 1-phosphate, yielding ADP-D-glycero-beta-D-manno-heptose. The protein is Bifunctional protein HldE of Haemophilus influenzae (strain PittGG).